The chain runs to 327 residues: Tetraacyldisaccharide 4'-kinase (327 aa).

An ATP-binding site is contributed by 56 to 63 (FVGGTGKT).

Belongs to the LpxK family.

The enzyme catalyses a lipid A disaccharide + ATP = a lipid IVA + ADP + H(+). The protein operates within glycolipid biosynthesis; lipid IV(A) biosynthesis; lipid IV(A) from (3R)-3-hydroxytetradecanoyl-[acyl-carrier-protein] and UDP-N-acetyl-alpha-D-glucosamine: step 6/6. Transfers the gamma-phosphate of ATP to the 4'-position of a tetraacyldisaccharide 1-phosphate intermediate (termed DS-1-P) to form tetraacyldisaccharide 1,4'-bis-phosphate (lipid IVA). This is Tetraacyldisaccharide 4'-kinase from Halorhodospira halophila (strain DSM 244 / SL1) (Ectothiorhodospira halophila (strain DSM 244 / SL1)).